We begin with the raw amino-acid sequence, 21 residues long: DYE-linked aldehyde dehydrogenase, gamma chain (21 aa).

In terms of assembly, heterotetramer composed of an alpha, a beta and two gamma chains. Requires [2Fe-2S] cluster as cofactor.

Functionally, active with aldehydes and formate esters as substrates. The chain is DYE-linked aldehyde dehydrogenase, gamma chain from Amycolatopsis methanolica.